Here is a 2548-residue protein sequence, read N- to C-terminus: Variant-silencing SET domain-containing protein (2548 aa).

Acidic residues predominate over residues 37 to 48 (IDDDDDDDNDNN). Disordered stretches follow at residues 37-61 (IDDD…KTNN), 336-379 (GDPK…DDDN), and 585-629 (SVDR…NTQT). Residues 336-357 (GDPKKRIERNKQEIEDHRREQD) show a composition bias toward basic and acidic residues. The segment covering 358 to 378 (GENDQEEDNYDDYDDEDDDDD) has biased composition (acidic residues). Positions 602–616 (NGSNNNNSSSNNNNN) are enriched in low complexity. The segment covering 617 to 629 (ITHITNDCDNTQT) has biased composition (polar residues). The segment at 787-846 (FYLCEFCEQNIFDMNNMIKKDKAKECMYRCNISCGRTFHKACVCYIKNNDNYICFFCLYD) adopts a PHD-type 1 zinc-finger fold. Positions 929 to 944 (IKRRHIYRKRRRRGPR) are enriched in basic residues. Disordered regions lie at residues 929 to 1054 (IKRR…CDEN), 1546 to 1575 (EKNT…NTLD), 1713 to 1732 (EQGS…NNAK), and 1772 to 1822 (INNA…DDHR). The segment covering 986 to 1016 (DNNDDNNDNNDDNNDNNDDNNDNNDNNDDNN) has biased composition (acidic residues). Composition is skewed to low complexity over residues 1017–1050 (NDNN…NNNN) and 1551–1572 (NKLC…TKYN). Residues 1714–1732 (QGSINNAKHNEQGSINNAK) are compositionally biased toward polar residues. Residues 2067-2117 (SDDYKCLCQGECNLYTCYNSLSNIQCSKSRCNLPEKIQDRKCFNRPFRKSF) form the AWS domain. In terms of domain architecture, SET spans 2119–2240 (KDLEIKKTEK…SGEEITYNYS (122 aa)). An S-adenosyl-L-methionine-binding site is contributed by Y2239. The PHD-type 2 zinc-finger motif lies at 2423–2471 (DEVCRKCKSCGNLTMCDKCFQSYHQLCGNMHSKMYKNNELVLCRFCQKY).

The protein belongs to the class V-like SAM-binding methyltransferase superfamily.

It localises to the nucleus. It is found in the chromosome. It catalyses the reaction L-lysyl(36)-[histone H3] + 3 S-adenosyl-L-methionine = N(6),N(6),N(6)-trimethyl-L-lysyl(36)-[histone H3] + 3 S-adenosyl-L-homocysteine + 3 H(+). Functionally, histone methyltransferase that specifically represses expression of the surface antigen-coding var genes by mediating trimethylation of 'Lys-36' of histone H3 (H3K36me3) on var genes. SETVS-dependent H3K36me3 is specifically involved in var genes silencing, a central step malaria pathogenesis: each parasite contains 60 distinct var genes that each code for a different PfEMP1 protein. During infection, the clonal parasite population expresses only 1 gene at a time, while the 59 other var genes are silenced. The parasite then switches to the expression of a new variant antigen as an immune-evasion mechanism to avoid the host antibody response. Represses expression of both var mRNA and antisense long non-coding RNA. The sequence is that of Variant-silencing SET domain-containing protein (SETVS) from Plasmodium falciparum (isolate 3D7).